The following is a 478-amino-acid chain: Transposase for insertion sequence element IS231C (478 aa).

Belongs to the transposase 11 family.

Functionally, involved in the transposition of the insertion sequence. The protein is Transposase for insertion sequence element IS231C of Bacillus thuringiensis subsp. berliner.